The sequence spans 96 residues: Neutrophil defensin 8 (96 aa).

A signal peptide spans 1-19 (MRTLVILAAILLVALQAQA). A propeptide spanning residues 20-66 (EPLQARTDEATAAQEQIPTDNPEVVVSLAWDESLAPKDSVPGLRKNM) is cleaved from the precursor. 3 disulfide bridges follow: cysteine 68–cysteine 96, cysteine 70–cysteine 85, and cysteine 75–cysteine 95.

Belongs to the alpha-defensin family.

Its subcellular location is the secreted. Functionally, probable antibiotic and antifungal activity. This Macaca mulatta (Rhesus macaque) protein is Neutrophil defensin 8.